We begin with the raw amino-acid sequence, 98 residues long: NADH-ubiquinone oxidoreductase chain 4L (98 aa).

Transmembrane regions (helical) follow at residues Met1–Ile21, Ser29–Leu49, and Ile61–Val81.

It belongs to the complex I subunit 4L family. In terms of assembly, core subunit of respiratory chain NADH dehydrogenase (Complex I) which is composed of 45 different subunits.

The protein resides in the mitochondrion inner membrane. The enzyme catalyses a ubiquinone + NADH + 5 H(+)(in) = a ubiquinol + NAD(+) + 4 H(+)(out). Core subunit of the mitochondrial membrane respiratory chain NADH dehydrogenase (Complex I) which catalyzes electron transfer from NADH through the respiratory chain, using ubiquinone as an electron acceptor. Part of the enzyme membrane arm which is embedded in the lipid bilayer and involved in proton translocation. The protein is NADH-ubiquinone oxidoreductase chain 4L (MT-ND4L) of Ursus maritimus (Polar bear).